Consider the following 234-residue polypeptide: Purine nucleoside phosphorylase DeoD-type (234 aa).

Residue His-5 participates in a purine D-ribonucleoside binding. Residues Gly-21, Arg-25, Arg-44, and 88–91 (RVGT) contribute to the phosphate site. Residues 178–180 (EME) and 202–203 (SD) contribute to the a purine D-ribonucleoside site. Asp-203 serves as the catalytic Proton donor.

The protein belongs to the PNP/UDP phosphorylase family. In terms of assembly, homohexamer; trimer of homodimers.

It catalyses the reaction a purine D-ribonucleoside + phosphate = a purine nucleobase + alpha-D-ribose 1-phosphate. It carries out the reaction a purine 2'-deoxy-D-ribonucleoside + phosphate = a purine nucleobase + 2-deoxy-alpha-D-ribose 1-phosphate. In terms of biological role, catalyzes the reversible phosphorolytic breakdown of the N-glycosidic bond in the beta-(deoxy)ribonucleoside molecules, with the formation of the corresponding free purine bases and pentose-1-phosphate. This is Purine nucleoside phosphorylase DeoD-type from Lactococcus lactis subsp. lactis (strain IL1403) (Streptococcus lactis).